Here is a 373-residue protein sequence, read N- to C-terminus: Arfaptin-1 (373 aa).

The disordered stretch occupies residues 1-47 (MAQESPKNSAAEIPVTSNGEVDDSREHSFNRDLKHSLPSGLGLSETQ). A2 carries the N-acetylalanine modification. Phosphoserine is present on residues S5, S28, S36, S39, S69, S79, and S132. The segment covering 22–35 (DDSREHSFNRDLKH) has biased composition (basic and acidic residues). In terms of domain architecture, AH spans 153–353 (TVDLELEAQI…NQKQLEQTLK (201 aa)). T361 carries the phosphothreonine modification.

As to quaternary structure, forms homodimers or heterodimers with ARFIP2. Interacts with non-myristoylated GTP-bound ARF3, but not to GDP-bound ARF3. Interacts with ARF1. Binds with lower affinity to ARF5 and with very little affinity to ARF6. Interacts with ARL1. Interacts with ATG9A. Post-translationally, phosphorylated by PRKD1; phosphorylation delocalizes ARFIP1 from the Golgi and disrupts its ability to inhibit the activity of ADP-ribosylation factor, an important component of the vesicle scission machinery. In terms of tissue distribution, ubiquitously expressed. Higher levels in liver, pancreas, placenta, skeletal muscle and heart.

It is found in the golgi apparatus. It localises to the trans-Golgi network membrane. Its function is as follows. Plays a role in controlling biogenesis of secretory granules at the trans-Golgi network. Mechanistically, binds ARF-GTP at the neck of a growing secretory granule precursor and forms a protective scaffold. Once the granule precursor has been completely loaded, active PRKD1 phosphorylates ARFIP1 and releases it from ARFs. In turn, ARFs induce fission. Through this mechanism, ensures proper secretory granule formation at the Golgi of pancreatic beta cells. This Homo sapiens (Human) protein is Arfaptin-1.